Consider the following 393-residue polypeptide: Acetyl-CoA acetyltransferase (393 aa).

Residue C88 is the Acyl-thioester intermediate of the active site. Active-site proton acceptor residues include H349 and C379.

Belongs to the thiolase-like superfamily. Thiolase family.

It localises to the cytoplasm. It catalyses the reaction 2 acetyl-CoA = acetoacetyl-CoA + CoA. It participates in metabolic intermediate biosynthesis; (R)-mevalonate biosynthesis; (R)-mevalonate from acetyl-CoA: step 1/3. This Pseudomonas aeruginosa (strain ATCC 15692 / DSM 22644 / CIP 104116 / JCM 14847 / LMG 12228 / 1C / PRS 101 / PAO1) protein is Acetyl-CoA acetyltransferase (atoB).